Reading from the N-terminus, the 539-residue chain is RING finger protein 37 (539 aa).

A disordered region spans residues 226–249; sequence PALPMESDCDPGGQSESQHSPCTL. Polar residues predominate over residues 239-249; the sequence is QSESQHSPCTL. The U-box domain maps to 258-338; that stretch reads DVPEEFLDPI…DRFLLQHSIS (81 aa). 2 disordered regions span residues 359 to 399 and 456 to 479; these read LPSR…EPTA and GTRGSSACRRPASSSEHPRSVSGP. A compositionally biased stretch (low complexity) spans 374–395; sequence HYSLGMSASSSATSPLFSPTTS. The RING-type zinc-finger motif lies at 481–526; the sequence is CASCKQAFSSYSTNEPVYQLPCGHLLCRPCLSEKQRSQPMMCTACR.

As to quaternary structure, interacts with UBE2L3. Interacts with VCP. Expressed in testis and placenta.

The protein resides in the nucleus. The enzyme catalyses S-ubiquitinyl-[E2 ubiquitin-conjugating enzyme]-L-cysteine + [acceptor protein]-L-lysine = [E2 ubiquitin-conjugating enzyme]-L-cysteine + N(6)-ubiquitinyl-[acceptor protein]-L-lysine.. It participates in protein modification; protein ubiquitination. May have a ubiquitin-protein ligase activity acting as an E3 ubiquitin-protein ligase or as a ubiquitin-ubiquitin ligase promoting elongation of ubiquitin chains on substrates. The sequence is that of RING finger protein 37 (Ubox5) from Mus musculus (Mouse).